A 164-amino-acid polypeptide reads, in one-letter code: S-ribosylhomocysteine lyase (164 aa).

Fe cation contacts are provided by H54, H58, and C128.

The protein belongs to the LuxS family. In terms of assembly, homodimer. Fe cation is required as a cofactor.

It carries out the reaction S-(5-deoxy-D-ribos-5-yl)-L-homocysteine = (S)-4,5-dihydroxypentane-2,3-dione + L-homocysteine. In terms of biological role, involved in the synthesis of autoinducer 2 (AI-2) which is secreted by bacteria and is used to communicate both the cell density and the metabolic potential of the environment. The regulation of gene expression in response to changes in cell density is called quorum sensing. Catalyzes the transformation of S-ribosylhomocysteine (RHC) to homocysteine (HC) and 4,5-dihydroxy-2,3-pentadione (DPD). In Campylobacter jejuni subsp. doylei (strain ATCC BAA-1458 / RM4099 / 269.97), this protein is S-ribosylhomocysteine lyase.